The primary structure comprises 205 residues: ATP-dependent Clp protease proteolytic subunit (205 aa).

Residue S98 is the Nucleophile of the active site. The active site involves H123.

It belongs to the peptidase S14 family. Fourteen ClpP subunits assemble into 2 heptameric rings which stack back to back to give a disk-like structure with a central cavity, resembling the structure of eukaryotic proteasomes.

It is found in the cytoplasm. The enzyme catalyses Hydrolysis of proteins to small peptides in the presence of ATP and magnesium. alpha-casein is the usual test substrate. In the absence of ATP, only oligopeptides shorter than five residues are hydrolyzed (such as succinyl-Leu-Tyr-|-NHMec, and Leu-Tyr-Leu-|-Tyr-Trp, in which cleavage of the -Tyr-|-Leu- and -Tyr-|-Trp bonds also occurs).. Its function is as follows. Cleaves peptides in various proteins in a process that requires ATP hydrolysis. Has a chymotrypsin-like activity. Plays a major role in the degradation of misfolded proteins. This is ATP-dependent Clp protease proteolytic subunit from Desulforapulum autotrophicum (strain ATCC 43914 / DSM 3382 / VKM B-1955 / HRM2) (Desulfobacterium autotrophicum).